We begin with the raw amino-acid sequence, 61 residues long: MAKKSLIAKQKKHQKFAVREYTRCVRCGRPHAVNRKFGVCRLCFRDLAYAGAIPGIKKASW.

Residues C24, C27, C40, and C43 each coordinate Zn(2+).

Belongs to the universal ribosomal protein uS14 family. Zinc-binding uS14 subfamily. As to quaternary structure, part of the 30S ribosomal subunit. Contacts proteins S3 and S10. The cofactor is Zn(2+).

Its function is as follows. Binds 16S rRNA, required for the assembly of 30S particles and may also be responsible for determining the conformation of the 16S rRNA at the A site. The polypeptide is Small ribosomal subunit protein uS14 (Ureaplasma parvum serovar 3 (strain ATCC 27815 / 27 / NCTC 11736)).